The chain runs to 928 residues: Nuclear pore complex-interacting protein family member B12 (928 aa).

Residues 73-93 (VVITLWIVYLWVSLLKTIFWS) traverse the membrane as a helical segment. Disordered regions lie at residues 242–452 (RMGH…NIKT) and 663–928 (ERLR…RRLS). The span at 252 to 263 (QQHSITDNSLSL) shows a compositional bias: polar residues. Residues 349-359 (PLPPSAPPSAP) show a composition bias toward pro residues. Composition is skewed to basic and acidic residues over residues 406 to 416 (DNIKTPAERLR), 698 to 708 (DNIKTPAERLR), 740 to 750 (DNIKTPAERLR), and 782 to 792 (DNIKTPAERLR).

The protein belongs to the NPIP family.

It localises to the membrane. The chain is Nuclear pore complex-interacting protein family member B12 from Homo sapiens (Human).